We begin with the raw amino-acid sequence, 375 residues long: 23S rRNA (uracil(747)-C(5))-methyltransferase RlmC (375 aa).

Positions 3, 11, 14, and 87 each coordinate [4Fe-4S] cluster. The S-adenosyl-L-methionine site is built by Gln-212, Phe-241, Glu-262, and Asn-307. Cys-334 acts as the Nucleophile in catalysis.

It belongs to the class I-like SAM-binding methyltransferase superfamily. RNA M5U methyltransferase family. RlmC subfamily.

The enzyme catalyses uridine(747) in 23S rRNA + S-adenosyl-L-methionine = 5-methyluridine(747) in 23S rRNA + S-adenosyl-L-homocysteine + H(+). Functionally, catalyzes the formation of 5-methyl-uridine at position 747 (m5U747) in 23S rRNA. This Salmonella typhi protein is 23S rRNA (uracil(747)-C(5))-methyltransferase RlmC.